The following is a 210-amino-acid chain: Frataxin, mitochondrial (210 aa).

The transit peptide at 1–41 directs the protein to the mitochondrion; that stretch reads MWTFGRRAVAGLLASPSPAQAQTLARAPRLAELAQLCSRRG.

It belongs to the frataxin family. As to quaternary structure, component of the mitochondrial core iron-sulfur cluster (ISC) complex composed of NFS1, LYRM4, NDUFAB1, ISCU, FXN, and FDX2; this complex is a heterohexamer containing two copies of each monomer. Homodimer. Monomer (probable predominant form). Oligomer. Monomers and polymeric aggregates of &gt;1 MDa have been isolated from mitochondria. A small fraction of heterologous overexpressed recombinant frataxin forms high-molecular weight aggregates that incorporate iron. Interacts with LYRM4. Interacts (via ferrous form) with ISCU; the interaction is possible when both are bound to the dimeric form of the cysteine desulfurase complex (NFS1:LYRM4) and the interaction enhances FXN interaction to the dimeric form of the cysteine desulfurase complex (NFS1:LYRM4). Interacts with FECH; one iron-bound FXN monomer seems to interact with a FECH homodimer. Interacts with SDHA and SDHB. Interacts with ACO2; the interaction is dependent on citrate. Interacts with HSPA9. Interacts with ACO1. Interacts with ISCU (cytoplasmic form). Processed in two steps by mitochondrial processing peptidase (MPP). MPP first cleaves the precursor to intermediate form and subsequently converts the intermediate to yield frataxin mature form (frataxin(81-210)) which is the predominant form. The additional forms, frataxin(56-210) and frataxin(78-210), seem to be produced when the normal maturation process is impaired; their physiological relevance is unsure.

The protein resides in the mitochondrion. It is found in the cytoplasm. Its subcellular location is the cytosol. The enzyme catalyses 4 Fe(2+) + O2 + 4 H(+) = 4 Fe(3+) + 2 H2O. Functions as an activator of persulfide transfer to the scaffoding protein ISCU as component of the core iron-sulfur cluster (ISC) assembly complex and participates to the [2Fe-2S] cluster assembly. Accelerates sulfur transfer from NFS1 persulfide intermediate to ISCU and to small thiols such as L-cysteine and glutathione leading to persulfuration of these thiols and ultimately sulfide release. Binds ferrous ion and is released from FXN upon the addition of both L-cysteine and reduced FDX2 during [2Fe-2S] cluster assembly. The core iron-sulfur cluster (ISC) assembly complex is involved in the de novo synthesis of a [2Fe-2S] cluster, the first step of the mitochondrial iron-sulfur protein biogenesis. This process is initiated by the cysteine desulfurase complex (NFS1:LYRM4:NDUFAB1) that produces persulfide which is delivered on the scaffold protein ISCU in a FXN-dependent manner. Then this complex is stabilized by FDX2 which provides reducing equivalents to accomplish the [2Fe-2S] cluster assembly. Finally, the [2Fe-2S] cluster is transferred from ISCU to chaperone proteins, including HSCB, HSPA9 and GLRX5. May play a role in the protection against iron-catalyzed oxidative stress through its ability to catalyze the oxidation of Fe(2+) to Fe(3+); the oligomeric form but not the monomeric form has in vitro ferroxidase activity. May be able to store large amounts of iron in the form of a ferrihydrite mineral by oligomerization; however, the physiological relevance is unsure as reports are conflicting and the function has only been shown using heterologous overexpression systems. May function as an iron chaperone protein that protects the aconitase [4Fe-4S]2+ cluster from disassembly and promotes enzyme reactivation. May play a role as a high affinity iron binding partner for FECH that is capable of both delivering iron to ferrochelatase and mediating the terminal step in mitochondrial heme biosynthesis. In terms of biological role, modulates the RNA-binding activity of ACO1. May be involved in the cytoplasmic iron-sulfur protein biogenesis. May contribute to oxidative stress resistance and overall cell survival. The sequence is that of Frataxin, mitochondrial from Macaca fascicularis (Crab-eating macaque).